A 423-amino-acid chain; its full sequence is 3-phosphoshikimate 1-carboxyvinyltransferase (423 aa).

Positions 20, 21, and 25 each coordinate 3-phosphoshikimate. Lys-20 provides a ligand contact to phosphoenolpyruvate. 2 residues coordinate phosphoenolpyruvate: Gly-91 and Arg-119. 3-phosphoshikimate contacts are provided by Thr-163, Ser-164, Gln-165, Asp-305, Gln-328, and Lys-332. Phosphoenolpyruvate is bound at residue Gln-165. The active-site Proton acceptor is the Asp-305. Arg-336 and Arg-377 together coordinate phosphoenolpyruvate.

The protein belongs to the EPSP synthase family. In terms of assembly, monomer.

The protein resides in the cytoplasm. It catalyses the reaction 3-phosphoshikimate + phosphoenolpyruvate = 5-O-(1-carboxyvinyl)-3-phosphoshikimate + phosphate. It functions in the pathway metabolic intermediate biosynthesis; chorismate biosynthesis; chorismate from D-erythrose 4-phosphate and phosphoenolpyruvate: step 6/7. Catalyzes the transfer of the enolpyruvyl moiety of phosphoenolpyruvate (PEP) to the 5-hydroxyl of shikimate-3-phosphate (S3P) to produce enolpyruvyl shikimate-3-phosphate and inorganic phosphate. The sequence is that of 3-phosphoshikimate 1-carboxyvinyltransferase from Acetivibrio thermocellus (strain ATCC 27405 / DSM 1237 / JCM 9322 / NBRC 103400 / NCIMB 10682 / NRRL B-4536 / VPI 7372) (Clostridium thermocellum).